The chain runs to 581 residues: DEAD-box ATP-dependent RNA helicase 22 (581 aa).

A Q motif motif is present at residues 80–108 (VSWKSLGLSDNVSIALRDSGFDRPSLTQA). The Helicase ATP-binding domain maps to 111–380 (IPSILSGKDV…GGILKHMFQD (270 aa)). 124–131 (AETGSGKT) serves as a coordination point for ATP. Residues 244–247 (DEAD) carry the DEAD box motif. Residues 408–566 (QVDALIEAVK…GFRNKVKKRA (159 aa)) form the Helicase C-terminal domain.

This sequence belongs to the DEAD box helicase family.

The enzyme catalyses ATP + H2O = ADP + phosphate + H(+). This Arabidopsis thaliana (Mouse-ear cress) protein is DEAD-box ATP-dependent RNA helicase 22 (RH22).